Reading from the N-terminus, the 459-residue chain is MTNYAIILAAGKGTRMKSDLPKVLHKVAGISMLEHVFRSVNAINPEKTVTVIGHKAELVEQVLAGQTEFVRQTEQLGTGHAVMMAEPVLENLTGQTLVIAGDTPLITGESLKNLIDFHINHKNVATILTAEADNPFGYGRIVRNQHGEVLKIVEQKDASDFEQQIKEINTGTYVFDNARLFEALKNINTNNAQGEYYITDVIGIFRENGEKVGAYTLKDFDESLGVNDRVALATAESVMRRRINQKHMVNGVSFVNPDATYIDVDVEIAPEVQVEANVTLKGQTKIGAETILTNGTYIVDSVIGERTVITNSMIEESSVADGVTVGPYAHIRPGSSLAKDVHVGNFVEVKGSSIGENTKAGHLTYIGNSEVGANVNFGAGTITVNYDGQKKYKTIIGANVFVGSNSTIIAPVELGDNSLVGAGSTITKDVPADAIALGRGRQINKEDYAKRLPHHPQNK.

The interval 1–229 is pyrophosphorylase; sequence MTNYAIILAA…FDESLGVNDR (229 aa). UDP-N-acetyl-alpha-D-glucosamine is bound by residues 8–11, K22, Q72, and 77–78; these read LAAG and GT. D102 is a Mg(2+) binding site. Residues G139, E154, N169, and N227 each contribute to the UDP-N-acetyl-alpha-D-glucosamine site. N227 lines the Mg(2+) pocket. The segment at 230 to 250 is linker; that stretch reads VALATAESVMRRRINQKHMVN. The tract at residues 251–459 is N-acetyltransferase; it reads GVSFVNPDAT…KRLPHHPQNK (209 aa). 2 residues coordinate UDP-N-acetyl-alpha-D-glucosamine: R332 and K350. H362 functions as the Proton acceptor in the catalytic mechanism. Residues Y365 and N376 each contribute to the UDP-N-acetyl-alpha-D-glucosamine site. Acetyl-CoA contacts are provided by residues A379, 385–386, S404, A422, and R439; that span reads NY.

In the N-terminal section; belongs to the N-acetylglucosamine-1-phosphate uridyltransferase family. This sequence in the C-terminal section; belongs to the transferase hexapeptide repeat family. Homotrimer. The cofactor is Mg(2+).

The protein resides in the cytoplasm. The catalysed reaction is alpha-D-glucosamine 1-phosphate + acetyl-CoA = N-acetyl-alpha-D-glucosamine 1-phosphate + CoA + H(+). It catalyses the reaction N-acetyl-alpha-D-glucosamine 1-phosphate + UTP + H(+) = UDP-N-acetyl-alpha-D-glucosamine + diphosphate. It participates in nucleotide-sugar biosynthesis; UDP-N-acetyl-alpha-D-glucosamine biosynthesis; N-acetyl-alpha-D-glucosamine 1-phosphate from alpha-D-glucosamine 6-phosphate (route II): step 2/2. The protein operates within nucleotide-sugar biosynthesis; UDP-N-acetyl-alpha-D-glucosamine biosynthesis; UDP-N-acetyl-alpha-D-glucosamine from N-acetyl-alpha-D-glucosamine 1-phosphate: step 1/1. It functions in the pathway bacterial outer membrane biogenesis; LPS lipid A biosynthesis. Its function is as follows. Catalyzes the last two sequential reactions in the de novo biosynthetic pathway for UDP-N-acetylglucosamine (UDP-GlcNAc). The C-terminal domain catalyzes the transfer of acetyl group from acetyl coenzyme A to glucosamine-1-phosphate (GlcN-1-P) to produce N-acetylglucosamine-1-phosphate (GlcNAc-1-P), which is converted into UDP-GlcNAc by the transfer of uridine 5-monophosphate (from uridine 5-triphosphate), a reaction catalyzed by the N-terminal domain. In Streptococcus gordonii (strain Challis / ATCC 35105 / BCRC 15272 / CH1 / DL1 / V288), this protein is Bifunctional protein GlmU.